Reading from the N-terminus, the 338-residue chain is Ketol-acid reductoisomerase (NADP(+)) (338 aa).

The KARI N-terminal Rossmann domain occupies M1–T181. Residues Y24–Q27, R47, and S52 contribute to the NADP(+) site. H107 is an active-site residue. G133 serves as a coordination point for NADP(+). The 146-residue stretch at N182–I327 folds into the KARI C-terminal knotted domain. Residues D190, E194, E226, and E230 each coordinate Mg(2+). S251 contacts substrate.

The protein belongs to the ketol-acid reductoisomerase family. The cofactor is Mg(2+).

It catalyses the reaction (2R)-2,3-dihydroxy-3-methylbutanoate + NADP(+) = (2S)-2-acetolactate + NADPH + H(+). The enzyme catalyses (2R,3R)-2,3-dihydroxy-3-methylpentanoate + NADP(+) = (S)-2-ethyl-2-hydroxy-3-oxobutanoate + NADPH + H(+). The protein operates within amino-acid biosynthesis; L-isoleucine biosynthesis; L-isoleucine from 2-oxobutanoate: step 2/4. It participates in amino-acid biosynthesis; L-valine biosynthesis; L-valine from pyruvate: step 2/4. Its function is as follows. Involved in the biosynthesis of branched-chain amino acids (BCAA). Catalyzes an alkyl-migration followed by a ketol-acid reduction of (S)-2-acetolactate (S2AL) to yield (R)-2,3-dihydroxy-isovalerate. In the isomerase reaction, S2AL is rearranged via a Mg-dependent methyl migration to produce 3-hydroxy-3-methyl-2-ketobutyrate (HMKB). In the reductase reaction, this 2-ketoacid undergoes a metal-dependent reduction by NADPH to yield (R)-2,3-dihydroxy-isovalerate. The protein is Ketol-acid reductoisomerase (NADP(+)) of Burkholderia ambifaria (strain MC40-6).